Here is a 94-residue protein sequence, read N- to C-terminus: MLKPLGDRVVIEVLEAEEKTASGIVLPDSAKEKPQSGKIVAVGSGRVLENGTKEPLEVAEGDTVIFAKYSGTEVTYEGTDYLILRESDILAITK.

The protein belongs to the GroES chaperonin family. As to quaternary structure, heptamer of 7 subunits arranged in a ring. Interacts with the chaperonin GroEL.

It localises to the cytoplasm. Together with the chaperonin GroEL, plays an essential role in assisting protein folding. The GroEL-GroES system forms a nano-cage that allows encapsulation of the non-native substrate proteins and provides a physical environment optimized to promote and accelerate protein folding. GroES binds to the apical surface of the GroEL ring, thereby capping the opening of the GroEL channel. This Listeria welshimeri serovar 6b (strain ATCC 35897 / DSM 20650 / CCUG 15529 / CIP 8149 / NCTC 11857 / SLCC 5334 / V8) protein is Co-chaperonin GroES.